The chain runs to 345 residues: NADPH dehydrogenase (345 aa).

23 to 26 (SPMC) lines the FMN pocket. Substrate is bound at residue Y28. A60 and Q102 together coordinate FMN. 164 to 167 (HGAH) is a substrate binding site. FMN contacts are provided by residues R215 and 307 to 308 (GR).

This sequence belongs to the NADH:flavin oxidoreductase/NADH oxidase family. NamA subfamily. In terms of assembly, homotetramer. It depends on FMN as a cofactor.

The enzyme catalyses A + NADPH + H(+) = AH2 + NADP(+). Catalyzes the reduction of the double bond of an array of alpha,beta-unsaturated aldehydes and ketones. It also reduces the nitro group of nitroester and nitroaromatic compounds. It could have a role in detoxification processes. The chain is NADPH dehydrogenase from Bacillus thuringiensis subsp. konkukian (strain 97-27).